The chain runs to 431 residues: Glutamate--tRNA ligase 1 (431 aa).

A 'HIGH' region motif is present at residues 6–16 (PSPTGDMHIGN). The 'KMSKS' region motif lies at 235 to 239 (KMSKR). Lys238 serves as a coordination point for ATP.

This sequence belongs to the class-I aminoacyl-tRNA synthetase family. Glutamate--tRNA ligase type 1 subfamily. As to quaternary structure, monomer.

It is found in the cytoplasm. It catalyses the reaction tRNA(Glu) + L-glutamate + ATP = L-glutamyl-tRNA(Glu) + AMP + diphosphate. Catalyzes the attachment of glutamate to tRNA(Glu) in a two-step reaction: glutamate is first activated by ATP to form Glu-AMP and then transferred to the acceptor end of tRNA(Glu). This Campylobacter jejuni (strain RM1221) protein is Glutamate--tRNA ligase 1.